The sequence spans 221 residues: Octanoyltransferase (221 aa).

A BPL/LPL catalytic domain is found at 14–202 (GVRPDTLWFL…MLGARNAPHP (189 aa)). Substrate is bound by residues 54–61 (RGGLLTYH), 128–130 (SIG), and 141–143 (GFA). C159 functions as the Acyl-thioester intermediate in the catalytic mechanism. Residues 197-221 (RNAPHPPAPNLSSGDLGTGTRAGRT) form a disordered region.

It belongs to the LipB family.

The protein resides in the cytoplasm. The enzyme catalyses octanoyl-[ACP] + L-lysyl-[protein] = N(6)-octanoyl-L-lysyl-[protein] + holo-[ACP] + H(+). It functions in the pathway protein modification; protein lipoylation via endogenous pathway; protein N(6)-(lipoyl)lysine from octanoyl-[acyl-carrier-protein]: step 1/2. In terms of biological role, catalyzes the transfer of endogenously produced octanoic acid from octanoyl-acyl-carrier-protein onto the lipoyl domains of lipoate-dependent enzymes. Lipoyl-ACP can also act as a substrate although octanoyl-ACP is likely to be the physiological substrate. The sequence is that of Octanoyltransferase from Frankia casuarinae (strain DSM 45818 / CECT 9043 / HFP020203 / CcI3).